The chain runs to 90 residues: Small ribosomal subunit protein uS15c (90 aa).

It belongs to the universal ribosomal protein uS15 family. In terms of assembly, part of the 30S ribosomal subunit.

The protein localises to the plastid. Its subcellular location is the chloroplast. The chain is Small ribosomal subunit protein uS15c (rps15) from Morus indica (Mulberry).